Consider the following 160-residue polypeptide: Cathelin-related peptide SC5 (160 aa).

A signal peptide spans 1–29 (METQRASLSLGRRSLWLLLLGLVLASASA). The propeptide occupies 30–131 (QALSYREAVL…DITCAEPQSV (102 aa)). Intrachain disulfides connect cysteine 86/cysteine 97 and cysteine 108/cysteine 125.

It belongs to the cathelicidin family.

It is found in the secreted. Its function is as follows. Broad spectrum bactericidal agent. This chain is Cathelin-related peptide SC5, found in Ovis aries (Sheep).